Consider the following 243-residue polypeptide: Probable phosphatase CBO3379/CLC_3322 (243 aa).

Histidine 8, histidine 10, histidine 16, histidine 41, glutamate 74, histidine 102, histidine 132, aspartate 192, and histidine 194 together coordinate Zn(2+).

Belongs to the PHP family. The cofactor is Zn(2+).

This is Probable phosphatase CBO3379/CLC_3322 from Clostridium botulinum (strain Hall / ATCC 3502 / NCTC 13319 / Type A).